A 353-amino-acid chain; its full sequence is Guanine nucleotide-binding protein subunit alpha (353 aa).

The segment at 1 to 25 (MGCGMSTEDKEGKARNEEIENQLKR) is disordered. Gly-2 carries N-myristoyl glycine lipidation. Cys-3 is lipidated: S-palmitoyl cysteine. Basic and acidic residues predominate over residues 7–25 (TEDKEGKARNEEIENQLKR). In terms of domain architecture, G-alpha spans 32–353 (NEIKMLLLGA…QENLRLCGLI (322 aa)). The interval 35-48 (KMLLLGAGESGKST) is G1 motif. GTP-binding residues include Glu-43, Ser-44, Gly-45, Lys-46, Ser-47, Thr-48, Asp-150, Leu-175, Thr-181, Gly-203, Asn-269, Lys-270, Asp-272, and Ala-325. Ser-47 is a binding site for Mg(2+). A G2 motif region spans residues 173-181 (DVLRSRVKT). Residue Thr-181 coordinates Mg(2+). Residues 196–205 (YRMFDVGGQR) form a G3 motif region. A G4 motif region spans residues 265–272 (ILFLNKID). Residues 323–328 (TCATDT) are G5 motif.

This sequence belongs to the G-alpha family. G(q) subfamily. As to quaternary structure, g proteins are composed of 3 units; alpha, beta and gamma. The alpha chain contains the guanine nucleotide binding site. The cofactor is Mg(2+).

In terms of biological role, guanine nucleotide-binding proteins (G proteins) are involved as modulators or transducers in various transmembrane signaling systems. The chain is Guanine nucleotide-binding protein subunit alpha (fadA) from Emericella nidulans (strain FGSC A4 / ATCC 38163 / CBS 112.46 / NRRL 194 / M139) (Aspergillus nidulans).